Reading from the N-terminus, the 284-residue chain is MSNLPTSTPVSPSNLAEENPKSNNPESSEIEDANFVGKILNKDQFNLNEQFSSDIEWIIKYLDVMQGVTVGLEKMCISGTSYHFSDKTEVPNSGWRYMPAYLKKVEFIKKNEAEANMIAELCEKMGHKEEQHFYDIKNVDHDSNIYTTTVFYCDKIKKMYSDVEKTVKTCNRRRKKVEKTQILPDLRDQCTKYHKAVHTLDEQCRELDNLKEYVRAGRHFHNRHFKQGLVVISALTAVRSGVIKEWMTRDSKRQQKKGKTTTVARSTNKKNKSMMGTVKDLKKK.

A compositionally biased stretch (polar residues) spans 1 to 27 (MSNLPTSTPVSPSNLAEENPKSNNPES). Disordered stretches follow at residues 1 to 29 (MSNL…ESSE) and 248 to 284 (TRDS…LKKK).

This is an uncharacterized protein from Caenorhabditis elegans.